The primary structure comprises 217 residues: Glutathione S-transferase (217 aa).

The region spanning 2–82 (TIKVHGNPRS…YLAYTHDHQN (81 aa)) is the GST N-terminal domain. Residues Ser11, 40–41 (HK), 53–54 (QV), and 66–67 (ES) each bind glutathione. Residues 91 to 217 (EKHEMAAQLV…EKTLALQKQA (127 aa)) enclose the GST C-terminal domain.

This sequence belongs to the GST superfamily. Phi family.

It localises to the cytoplasm. It carries out the reaction RX + glutathione = an S-substituted glutathione + a halide anion + H(+). Functionally, conjugation of reduced glutathione to a wide number of exogenous and endogenous hydrophobic electrophiles. The sequence is that of Glutathione S-transferase (GST) from Silene vulgaris (Bladder campion).